The sequence spans 216 residues: Penicillin-binding protein activator LpoB (216 aa).

The signal sequence occupies residues 1–20; it reads MIKNLSRYALVTAFALFLSG. Cys-21 is lipidated: N-palmitoyl cysteine. The S-diacylglycerol cysteine moiety is linked to residue Cys-21. Residues 28–77 are disordered; sequence QPAPVDEAKPGTEQPAQPTQPVPTVPSVPTVPAQPGPIEHPDQTSQPAPR.

This sequence belongs to the LpoB family. In terms of assembly, interacts with PBP1b.

The protein localises to the cell outer membrane. Its function is as follows. Regulator of peptidoglycan synthesis that is essential for the function of penicillin-binding protein 1B (PBP1b). The protein is Penicillin-binding protein activator LpoB of Enterobacter sp. (strain 638).